The following is a 21-amino-acid chain: S-layer protein 2 (21 aa).

The protein localises to the secreted. It is found in the cell wall. The protein resides in the S-layer. Functionally, the S-layer is a paracrystalline mono-layered assembly of proteins which coat the surface of bacteria. This Bacillus thuringiensis subsp. konkukian protein is S-layer protein 2.